Consider the following 432-residue polypeptide: N-acylneuraminate cytidylyltransferase (432 aa).

Methionine 1 carries the post-translational modification N-acetylmethionine. The segment at methionine 1–glutamate 38 is disordered. Positions proline 15–arginine 31 match the BC1 motif motif. Basic residues predominate over residues arginine 18–arginine 29. Omega-N-methylarginine is present on residues arginine 35 and arginine 50. Substrate-binding residues include arginine 50, asparagine 60, arginine 109, serine 118, serine 120, and glutamine 141. Residues lysine 198–aspartate 204 carry the BC2 motif motif. Residue arginine 199 is part of the active site. The short motif at lysine 267–lysine 274 is the BC3 motif element.

Belongs to the CMP-NeuNAc synthase family. As to quaternary structure, homotetramer; the active enzyme is formed by a dimer of dimers. As to expression, highly expressed in brain and heart, and at intermediate level muscle and liver.

It is found in the nucleus. It catalyses the reaction an N-acylneuraminate + CTP = a CMP-N-acyl-beta-neuraminate + diphosphate. The protein operates within amino-sugar metabolism; N-acetylneuraminate metabolism. In terms of biological role, catalyzes the activation of N-acetylneuraminic acid (NeuNAc) to cytidine 5'-monophosphate N-acetylneuraminic acid (CMP-NeuNAc), a substrate required for the addition of sialic acid. Has some activity toward NeuNAc, N-glycolylneuraminic acid (Neu5Gc) or 2-keto-3-deoxy-D-glycero-D-galacto-nononic acid (KDN). The polypeptide is N-acylneuraminate cytidylyltransferase (Cmas) (Mus musculus (Mouse)).